A 559-amino-acid chain; its full sequence is MRKFAYCKVVLATSLIWVLLDMFLLLYFSECNKCDEKKERGLPAGDVLEPVQKPHEGPGEMGKPVVIPKEDQEKMKEMFKINQFNLMASEMIALNRSLPDVRLEGCKTKVYPDNLPTTSVVIVFHNEAWSTLLRTVHSVINRSPRHMIEEIVLVDDASERDFLKRPLESYVKKLKVPVHVIRMEQRSGLIRARLKGAAVSKGQVITFLDAHCECTVGWLEPLLARIKHDRRTVVCPIIDVISDDTFEYMAGSDMTYGGFNWKLNFRWYPVPQREMDRRKGDRTLPVRTPTMAGGLFSIDRDYFQEIGTYDAGMDIWGGENLEISFRIWQCGGTLEIVTCSHVGHVFRKATPYTFPGGTGQIINKNNRRLAEVWMDEFKNFFYIISPGVTKVDYGDISSRVGLRHKLQCKPFSWYLENIYPDSQIPRHYFSLGEIRNVETNQCLDNMARKENEKVGIFNCHGMGGNQVFSYTANKEIRTDDLCLDVSKLNGPVTMLKCHHLKGNQLWEYDPVKLTLQHVNSNQCLDKATEEDSQVPSIRDCNGSRSQQWLLRNVTLPEIF.

At 1–8 the chain is on the cytoplasmic side; that stretch reads MRKFAYCK. The chain crosses the membrane as a helical; Signal-anchor for type II membrane protein span at residues 9–28; the sequence is VVLATSLIWVLLDMFLLLYF. Over 29–559 the chain is Lumenal; sequence SECNKCDEKK…LRNVTLPEIF (531 aa). Positions 45–65 are disordered; sequence GDVLEPVQKPHEGPGEMGKPV. Asn95 carries an N-linked (GlcNAc...) asparagine glycan. 5 disulfides stabilise this stretch: Cys106–Cys339, Cys330–Cys408, Cys442–Cys459, Cys482–Cys497, and Cys523–Cys540. Residues 115–225 are catalytic subdomain A; the sequence is LPTTSVVIVF…VGWLEPLLAR (111 aa). The substrate site is built by Asp156 and Arg186. Asp209 and His211 together coordinate Mn(2+). The interval 285-347 is catalytic subdomain B; it reads PVRTPTMAGG…TCSHVGHVFR (63 aa). Trp316 contacts substrate. Position 344 (His344) interacts with Mn(2+). Residues Arg347 and Tyr352 each coordinate substrate. A Ricin B-type lectin domain is found at 429-551; it reads FSLGEIRNVE…GSRSQQWLLR (123 aa). Asn552 carries an N-linked (GlcNAc...) asparagine glycan.

Belongs to the glycosyltransferase 2 family. GalNAc-T subfamily. Requires Mn(2+) as cofactor. In terms of tissue distribution, widely expressed. Expressed in all tissues tested.

The protein localises to the golgi apparatus. The protein resides in the golgi stack membrane. Its subcellular location is the secreted. The catalysed reaction is L-seryl-[protein] + UDP-N-acetyl-alpha-D-galactosamine = a 3-O-[N-acetyl-alpha-D-galactosaminyl]-L-seryl-[protein] + UDP + H(+). The enzyme catalyses L-threonyl-[protein] + UDP-N-acetyl-alpha-D-galactosamine = a 3-O-[N-acetyl-alpha-D-galactosaminyl]-L-threonyl-[protein] + UDP + H(+). The protein operates within protein modification; protein glycosylation. In terms of biological role, catalyzes the initial reaction in O-linked oligosaccharide biosynthesis, the transfer of an N-acetyl-D-galactosamine residue to a serine or threonine residue on the protein receptor. Has a broad spectrum of substrates such as apomucin-, MUC5AC-, MUC1- and MUC2-derived peptides. In Homo sapiens (Human), this protein is Polypeptide N-acetylgalactosaminyltransferase 1.